A 198-amino-acid chain; its full sequence is Beta-crystallin A1-1 (198 aa).

The segment at Met1–Pro13 is N-terminal arm. 2 Beta/gamma crystallin 'Greek key' domains span residues Trp14–Cys53 and Gly54–Cys100. A connecting peptide region spans residues Ser101 to Glu106. 2 Beta/gamma crystallin 'Greek key' domains span residues Ser107–Cys148 and Gly149–Gln197.

The protein belongs to the beta/gamma-crystallin family. As to quaternary structure, homo/heterodimer, or complexes of higher-order. The structure of beta-crystallin oligomers seems to be stabilized through interactions between the N-terminal arms. Post-translationally, the N-terminus is blocked.

In terms of biological role, crystallins are the dominant structural components of the vertebrate eye lens. This is Beta-crystallin A1-1 from Aquarana catesbeiana (American bullfrog).